Reading from the N-terminus, the 324-residue chain is 4-hydroxybenzoyl-CoA reductase subunit beta (324 aa).

Residues 2 to 217 (NILTDFRTHR…AAIEVPPTGA (216 aa)) form the FAD-binding PCMH-type domain. FAD-binding positions include 29 to 36 (PLGAGTDL), Thr-111, Asn-115, and Gln-118. Residues Cys-122, Cys-138, Cys-146, and Cys-155 each contribute to the [4Fe-4S] cluster site. Residues Asp-162 and Lys-224 each contribute to the FAD site.

As to quaternary structure, heterohexamer of two alpha, two beta and two gamma subunits. Requires FAD as cofactor. [4Fe-4S] cluster serves as cofactor.

The catalysed reaction is oxidized 2[4Fe-4S]-[ferredoxin] + benzoyl-CoA + H2O = 4-hydroxybenzoyl-CoA + reduced 2[4Fe-4S]-[ferredoxin] + 2 H(+). With respect to regulation, inactivated by low concentrations of cyanide in vitro. Functionally, component of a complex that catalyzes the reductive dehydroxylation of 4-hydroxybenzoyl-CoA to benzoyl-CoA. Reaction is not reversible. Is a key enzyme in the anaerobic degradation of phenolic compounds. The polypeptide is 4-hydroxybenzoyl-CoA reductase subunit beta (hcrB) (Thauera aromatica).